The following is a 196-amino-acid chain: MYEYINGLITNIYPAYLVIADRSGVGYKLFVANPYRFEQNVESHVYVEQIVRENEMTLYGFIDENEKYLFNKLLNVSGIGPKSALAILASDDAAGLVTAVANDDASYLTQFPGVGKKTAQQIVLDLKGKLDDLALSAGMTVETVPTTDNQALADALAALESLGYSAKDVAKLQTVLANQKDTTDGYIRSALKFLVK.

Residues 1–62 (MYEYINGLIT…ENEMTLYGFI (62 aa)) are domain I. The interval 63–141 (DENEKYLFNK…DLALSAGMTV (79 aa)) is domain II. The tract at residues 142-146 (ETVPT) is flexible linker. The segment at 147–196 (TDNQALADALAALESLGYSAKDVAKLQTVLANQKDTTDGYIRSALKFLVK) is domain III.

The protein belongs to the RuvA family. In terms of assembly, homotetramer. Forms an RuvA(8)-RuvB(12)-Holliday junction (HJ) complex. HJ DNA is sandwiched between 2 RuvA tetramers; dsDNA enters through RuvA and exits via RuvB. An RuvB hexamer assembles on each DNA strand where it exits the tetramer. Each RuvB hexamer is contacted by two RuvA subunits (via domain III) on 2 adjacent RuvB subunits; this complex drives branch migration. In the full resolvosome a probable DNA-RuvA(4)-RuvB(12)-RuvC(2) complex forms which resolves the HJ.

It localises to the cytoplasm. In terms of biological role, the RuvA-RuvB-RuvC complex processes Holliday junction (HJ) DNA during genetic recombination and DNA repair, while the RuvA-RuvB complex plays an important role in the rescue of blocked DNA replication forks via replication fork reversal (RFR). RuvA specifically binds to HJ cruciform DNA, conferring on it an open structure. The RuvB hexamer acts as an ATP-dependent pump, pulling dsDNA into and through the RuvAB complex. HJ branch migration allows RuvC to scan DNA until it finds its consensus sequence, where it cleaves and resolves the cruciform DNA. The polypeptide is Holliday junction branch migration complex subunit RuvA (Leuconostoc citreum (strain KM20)).